Consider the following 329-residue polypeptide: Olfactory receptor 52L1 (329 aa).

Residues 1–43 (MTLVSFFSFLSKPLIMLLSNSSWRLSQPSFLLVGIPGLEESQH) are Extracellular-facing. An N-linked (GlcNAc...) asparagine glycan is attached at Asn20. Residues 44 to 64 (WIALPLGILYLLALVGNVTIL) form a helical membrane-spanning segment. The Cytoplasmic segment spans residues 65–72 (FIIWMDPS). Residues 73–93 (LHQSMYLFLSMLAAIDLVLAS) traverse the membrane as a helical segment. The Extracellular portion of the chain corresponds to 94 to 117 (STAPKALAVLLVHAHEIGYIVCLI). Cys115 and Cys207 are joined by a disulfide. A helical transmembrane segment spans residues 118 to 138 (QMFFIHAFSSMESGVLVAMAL). Residues 139 to 157 (DRYVAICHPLHHSTILHPG) are Cytoplasmic-facing. The chain crosses the membrane as a helical span at residues 158–178 (VIGRIGMVVLVRGLLLLIPFP). Residues 179-214 (ILLGTLIFCQATIIGHAYCEHMAVVKLACSETTVNR) lie on the Extracellular side of the membrane. The chain crosses the membrane as a helical span at residues 215–235 (AYGLTMALLVIGLDVLAIGVS). The Cytoplasmic segment spans residues 236–255 (YAHILQAVLKVPGSEARLKA). Residues 256–276 (FSTCGSHICVILVFYVPGIFS) form a helical membrane-spanning segment. The Extracellular segment spans residues 277–291 (FLTHRFGHHVPHHVH). Residues 292 to 312 (VLLATRYLLMPPALNPLVYGV) traverse the membrane as a helical segment. Topologically, residues 313–329 (KTQQIRQRVLRVFTQKD) are cytoplasmic.

This sequence belongs to the G-protein coupled receptor 1 family.

It is found in the cell membrane. Odorant receptor. This Homo sapiens (Human) protein is Olfactory receptor 52L1 (OR52L1).